The chain runs to 88 residues: Small ribosomal subunit protein uS15 (88 aa).

Belongs to the universal ribosomal protein uS15 family. As to quaternary structure, part of the 30S ribosomal subunit. Forms a bridge to the 50S subunit in the 70S ribosome, contacting the 23S rRNA.

Functionally, one of the primary rRNA binding proteins, it binds directly to 16S rRNA where it helps nucleate assembly of the platform of the 30S subunit by binding and bridging several RNA helices of the 16S rRNA. In terms of biological role, forms an intersubunit bridge (bridge B4) with the 23S rRNA of the 50S subunit in the ribosome. This is Small ribosomal subunit protein uS15 from Psychrobacter arcticus (strain DSM 17307 / VKM B-2377 / 273-4).